Consider the following 338-residue polypeptide: Methionine aminopeptidase 1D, mitochondrial (338 aa).

Residues 1-47 constitute a mitochondrion transit peptide; it reads MAAPCAAQCLYRTGGLRLLQRISRLPHCHKDASLAHQCQFHRSFFWR. A substrate-binding site is contributed by His-164. The a divalent metal cation site is built by Asp-181, Asp-192, and His-255. A substrate-binding site is contributed by His-262. A divalent metal cation is bound by residues Glu-287 and Glu-318.

It belongs to the peptidase M24A family. Methionine aminopeptidase type 1 subfamily. It depends on Co(2+) as a cofactor. The cofactor is Zn(2+). Requires Mn(2+) as cofactor. Fe(2+) serves as cofactor.

It localises to the mitochondrion. It catalyses the reaction Release of N-terminal amino acids, preferentially methionine, from peptides and arylamides.. Removes the N-terminal methionine from nascent proteins. The N-terminal methionine is often cleaved when the second residue in the primary sequence is small and uncharged (Met-Ala-, Cys, Gly, Pro, Ser, Thr, or Val). Requires deformylation of the N(alpha)-formylated initiator methionine before it can be hydrolyzed. The chain is Methionine aminopeptidase 1D, mitochondrial (metap1d) from Danio rerio (Zebrafish).